Reading from the N-terminus, the 1184-residue chain is C5a peptidase (1184 aa).

The N-terminal stretch at 1-31 (MRKKQKLPFDKLAIALMSTSILLNAQSDIKA) is a signal peptide. Composition is skewed to polar residues over residues 33–52 (TVTE…QPTA) and 89–100 (AKTTDTPATSKA). The tract at residues 33–117 (TVTEDTPATE…PSQVKTLQEK (85 aa)) is disordered. Residues 99-581 (KATIRDLNDP…AGAVDAKKAS (483 aa)) form the Peptidase S8 domain. Catalysis depends on charge relay system residues D130, H193, and S512. 4 stretches are compositionally biased toward basic and acidic residues: residues 1029–1054 (EGHS…KPEQ), 1061–1071 (PDKKPETKPEQ), 1078–1088 (PDKKPEAKPEQ), and 1095–1107 (PDKK…EKDS). A disordered region spans residues 1029-1150 (EGHSNKPEQD…RDQLPTTNDK (122 aa)). 4 repeat units span residues 1034 to 1067 (KPEQ…KPET), 1068 to 1084 (KPEQ…KPEA), 1085 to 1101 (KPEQ…KPET), and 1102 to 1118 (KPEK…TPQK). The 4 X 17 AA tandem repeats stretch occupies residues 1034 to 1118 (KPEQDGSDQV…GQTPGKTPQK (85 aa)). Residues 1109–1123 (GQTPGKTPQKGQPSR) are compositionally biased toward polar residues. Residues 1144-1148 (LPTTN) carry the LPXTG sorting signal motif. Residue T1147 is modified to Pentaglycyl murein peptidoglycan amidated threonine. Positions 1148–1184 (NDKDTNRLHLLKLVMTTFFFGLVAHIFKTKRQKETKK) are cleaved as a propeptide — removed by sortase.

Belongs to the peptidase S8 family. In terms of processing, cleaved by SpeB protease; leading to its degradation. Degradation by SpeB is probably strictly regulated to preserve integrity of C5a peptidase.

The protein localises to the secreted. It is found in the cell wall. It catalyses the reaction The primary cleavage site is at 67-His-|-Lys-68 in human C5a with a minor secondary cleavage site at 58-Ala-|-Ser-59.. Its function is as follows. This virulence factor of S.pyogenes specifically cleaves the human serum chemotaxin C5a at '68-Lys-|-Asp-69' bond near its C-terminus, destroying its ability to serve as a chemoattractant. The sequence is that of C5a peptidase (scpA) from Streptococcus pyogenes serotype M6 (strain ATCC BAA-946 / MGAS10394).